The following is a 214-amino-acid chain: uncharacterized protein (214 aa).

Residues 1–194 (MVSANREMAV…MHYSEYLSYV (194 aa)) form the AMMECR1 domain.

This is an uncharacterized protein from Arabidopsis thaliana (Mouse-ear cress).